We begin with the raw amino-acid sequence, 1205 residues long: A disintegrin and metalloproteinase with thrombospondin motifs 2 (1205 aa).

The first 28 residues, M1–A28, serve as a signal peptide directing secretion. A propeptide spanning residues R29 to R253 is cleaved from the precursor. N-linked (GlcNAc...) asparagine glycans are attached at residues N104 and N245. Residues Y260–P464 enclose the Peptidase M12B domain. Intrachain disulfides connect C337-C386, C380-C459, C419-C445, C486-C511, C497-C520, C506-C539, C533-C544, C567-C604, C571-C609, and C582-C594. H402 lines the Zn(2+) pocket. The active site involves E403. 2 residues coordinate Zn(2+): H406 and H412. Positions Q474–R554 constitute a Disintegrin domain. The TSP type-1 1 domain occupies D555 to P610. Residues R685 to D687 carry the Cell attachment site motif. Positions K717–D845 are spacer. TSP type-1 domains are found at residues V848–E906, S908–L968, and C969–P1023. N942, N943, and N987 each carry an N-linked (GlcNAc...) asparagine glycan. 3 cysteine pairs are disulfide-bonded: C981–C1017, C985–C1022, and C996–C1006. An N-linked (GlcNAc...) asparagine glycan is attached at N1025. The PLAC domain maps to S1053–D1091. 3 N-linked (GlcNAc...) asparagine glycosylation sites follow: N1092, N1139, and N1144. Residues G1163 to T1184 are disordered.

As to quaternary structure, may belong to a multimeric complex. Binds specifically to collagen type XIV. Zn(2+) serves as cofactor. The N-terminus is blocked. Post-translationally, the precursor is cleaved by a furin endopeptidase. In terms of processing, glycosylated. Can be O-fucosylated by POFUT2 on a serine or a threonine residue found within the consensus sequence C1-X(2)-(S/T)-C2-G of the TSP type-1 repeat domains where C1 and C2 are the first and second cysteine residue of the repeat, respectively. Fucosylated repeats can then be further glycosylated by the addition of a beta-1,3-glucose residue by the glucosyltransferase, B3GALTL. Fucosylation mediates the efficient secretion of ADAMTS family members. Can also be C-glycosylated with one or two mannose molecules on tryptophan residues within the consensus sequence W-X-X-W of the TPRs, and N-glycosylated. These other glycosylations can also facilitate secretion. Enzymatic activity is detected at high level in all type I collagen-rich tissues such as skin, bones, tendons and aorta and at low level in brain and thymus. The mRNA levels were disproportionately high in heart, liver, retina and muscle.

The protein localises to the secreted. It localises to the extracellular space. Its subcellular location is the extracellular matrix. It carries out the reaction Cleaves the N-propeptide of collagen chain alpha1(I) at Pro-|-Gln and of alpha1(II) and alpha2(I) at Ala-|-Gln.. In terms of biological role, cleaves the propeptides of type I and II collagen prior to fibril assembly. Does not act on type III collagen. Cleaves lysyl oxidase LOX at a site downstream of its propeptide cleavage site to produce a short LOX form with reduced collagen-binding activity. The sequence is that of A disintegrin and metalloproteinase with thrombospondin motifs 2 (ADAMTS2) from Bos taurus (Bovine).